Reading from the N-terminus, the 808-residue chain is Dynamin-like protein B (808 aa).

The Dynamin-type G domain occupies Phe43–Pro340. Positions Gly53–Ser60 are G1 motif. Gly53–Ser60 contributes to the GTP binding site. The segment at Leu79 to Arg80 is G2 motif. The interval Glu150–Ser153 is G3 motif. GTP-binding positions include Glu150–Val154 and Asn239–His242. Residues Asn239–His242 are G4 motif. The G5 motif stretch occupies residues Pro276–Ala279. 2 disordered regions span residues Ser536–Ile565 and Ser665–His695. Low complexity-rich tracts occupy residues Ser552–Ile565 and Ser665–Asn694.

It belongs to the TRAFAC class dynamin-like GTPase superfamily. Dynamin/Fzo/YdjA family.

Its subcellular location is the cytoplasm. It catalyses the reaction GTP + H2O = GDP + phosphate + H(+). Involved in cytokinesis. May hydrolyze GTP. This Dictyostelium discoideum (Social amoeba) protein is Dynamin-like protein B (dlpB).